Here is a 1481-residue protein sequence, read N- to C-terminus: Chromosome partition protein MukB (1481 aa).

34-41 (GGNGAGKS) contacts ATP. 5 coiled-coil regions span residues 338–480 (SLVQ…QAYQ), 509–604 (QHLA…APVW), 780–805 (RAAR…ATLS), 835–1116 (EAEI…AKAG), and 1210–1265 (EAIE…LQAV). Positions 666–783 (PSGAEDSRMI…EVPLFGRAAR (118 aa)) are flexible hinge.

It belongs to the SMC family. MukB subfamily. Homodimerization via its hinge domain. Binds to DNA via its C-terminal region. Interacts, and probably forms a ternary complex, with MukE and MukF via its C-terminal region. The complex formation is stimulated by calcium or magnesium. Interacts with tubulin-related protein FtsZ.

The protein resides in the cytoplasm. It localises to the nucleoid. Functionally, plays a central role in chromosome condensation, segregation and cell cycle progression. Functions as a homodimer, which is essential for chromosome partition. Involved in negative DNA supercoiling in vivo, and by this means organize and compact chromosomes. May achieve or facilitate chromosome segregation by condensation DNA from both sides of a centrally located replisome during cell division. The sequence is that of Chromosome partition protein MukB from Yersinia enterocolitica serotype O:8 / biotype 1B (strain NCTC 13174 / 8081).